The primary structure comprises 352 residues: Isoflavone-7-O-methyltransferase 8 (352 aa).

A substrate-binding site is contributed by 118 to 127; the sequence is VLDPTLSGSY. Gly196, Asp219, Asp239, Met240, and Lys253 together coordinate S-adenosyl-L-methionine. The active-site Proton acceptor is the His257.

The protein belongs to the class I-like SAM-binding methyltransferase superfamily. Cation-independent O-methyltransferase family. COMT subfamily. In terms of assembly, homodimer.

The catalysed reaction is a 7-hydroxyisoflavone + S-adenosyl-L-methionine = a 7-methoxyisoflavone + S-adenosyl-L-homocysteine + H(+). Its pathway is phytoalexin biosynthesis; medicarpin biosynthesis. Transfers a methyl group to 7-hydroxyls of the isoflavones daidzein, genistein and 6,7,4'-trihydroxyisoflavone. Can also methylate (+)6a-hydroxymaackiain with lower efficiency. This chain is Isoflavone-7-O-methyltransferase 8, found in Medicago sativa (Alfalfa).